The chain runs to 491 residues: Tyrosine 3-monooxygenase (491 aa).

Ser19 carries the phosphoserine; by CaMK2 modification. Position 31 is a phosphoserine (Ser31). Ser40 carries the post-translational modification Phosphoserine; by CaMK2 and PKA. Fe cation contacts are provided by His324, His329, and Glu369. Position 465 is a phosphoserine (Ser465).

It belongs to the biopterin-dependent aromatic amino acid hydroxylase family. As to quaternary structure, homotetramer. Interacts (when phosphorylated at Ser-19) with YWHAG; one YWHAG dimer bounds to one TH tetramer and this interaction may influence the phosphorylation and dephosphorylation of other sites. Interacts with NT5DC2; the interaction results in reduced phosphorylation and decreased catalytic activity of TH. It depends on Fe(2+) as a cofactor. Post-translationally, phosphorylated on Ser-19, Ser-31 and Ser-40 by several protein kinases with different site specificities. Phosphorylation at Ser-31 and Ser-40 leads to an increase of TH activity. Phosphorylation at Ser-40 activates the enzyme and also counteracts the feedback inhibition of TH by catecholamines. Phosphorylation of Ser-19 and Ser-31 triggers the proteasomal degradation of TH through the ubiquitin-proteasome pathway. Phosphorylation at Ser-31 facilitates transport of TH from the soma to the nerve terminals via the microtubule network. Phosphorylation at Ser-19 induces the high-affinity binding to the 14-3-3 protein YWHAG; this interaction may influence the phosphorylation and dephosphorylation of other sites. Ser-19 increases the phosphorylation at Ser-40 in a hierarchical manner, leading to increased activity.

It localises to the cytoplasm. It is found in the perinuclear region. Its subcellular location is the nucleus. The protein localises to the cell projection. The protein resides in the axon. It localises to the cytoplasmic vesicle. It is found in the secretory vesicle. Its subcellular location is the synaptic vesicle. The catalysed reaction is (6R)-L-erythro-5,6,7,8-tetrahydrobiopterin + L-tyrosine + O2 = (4aS,6R)-4a-hydroxy-L-erythro-5,6,7,8-tetrahydrobiopterin + L-dopa. It functions in the pathway catecholamine biosynthesis; dopamine biosynthesis; dopamine from L-tyrosine: step 1/2. Its activity is regulated as follows. Inhibited in feedback fashion by the catecholamine neurotransmitters, especially by dopamine in competition with tetrahydrobiopterin. Phosphorylation of several Ser/Thr residues in the N-terminus regulates the catalytic activity. Ser-31 and Ser-40 are readily phosphorylated to activate the catalytic activity. A Cysteine modification induced by N-ethylmaleimide (NEM), inhibits tyrosine 3-monooxygenase activity through the modification of the Cys-170. Functionally, catalyzes the conversion of L-tyrosine to L-dihydroxyphenylalanine (L-Dopa), the rate-limiting step in the biosynthesis of catecholamines, dopamine, noradrenaline, and adrenaline. Uses tetrahydrobiopterin and molecular oxygen to convert tyrosine to L-Dopa. In addition to tyrosine, is able to catalyze the hydroxylation of phenylalanine and tryptophan with lower specificity. Positively regulates the regression of retinal hyaloid vessels during postnatal development. This is Tyrosine 3-monooxygenase (TH) from Bos taurus (Bovine).